Consider the following 65-residue polypeptide: Large ribosomal subunit protein uL29 (65 aa).

It belongs to the universal ribosomal protein uL29 family.

This is Large ribosomal subunit protein uL29 from Buchnera aphidicola subsp. Baizongia pistaciae (strain Bp).